A 129-amino-acid chain; its full sequence is Prefoldin subunit 6 (129 aa).

An N-acetylalanine modification is found at A2. K21 is subject to N6-acetyllysine. Position 66 is an N6-acetyllysine; alternate (K66). K66 participates in a covalent cross-link: Glycyl lysine isopeptide (Lys-Gly) (interchain with G-Cter in SUMO1); alternate. A Glycyl lysine isopeptide (Lys-Gly) (interchain with G-Cter in SUMO2); alternate cross-link involves residue K66.

Belongs to the prefoldin subunit beta family. Heterohexamer of two PFD-alpha type and four PFD-beta type subunits. Component of the PAQosome complex which is responsible for the biogenesis of several protein complexes and which consists of R2TP complex members RUVBL1, RUVBL2, RPAP3 and PIH1D1, URI complex members PFDN2, PFDN6, PDRG1, UXT and URI1 as well as ASDURF, POLR2E and DNAAF10/WDR92.

Functionally, binds specifically to cytosolic chaperonin (c-CPN) and transfers target proteins to it. Binds to nascent polypeptide chain and promotes folding in an environment in which there are many competing pathways for nonnative proteins. The sequence is that of Prefoldin subunit 6 (PFDN6) from Canis lupus familiaris (Dog).